Reading from the N-terminus, the 165-residue chain is UPF0303 protein Bcep1808_1522 (165 aa).

The protein belongs to the UPF0303 family.

In Burkholderia vietnamiensis (strain G4 / LMG 22486) (Burkholderia cepacia (strain R1808)), this protein is UPF0303 protein Bcep1808_1522.